The following is a 110-amino-acid chain: UPF0060 membrane protein Pcryo_1341 (110 aa).

Helical transmembrane passes span 7 to 27, 33 to 53, 63 to 83, and 87 to 107; these read VGLF…PYLW, SIWL…LLTL, AAYG…VDGI, and TWDI…MFAP.

The protein belongs to the UPF0060 family.

It is found in the cell inner membrane. This Psychrobacter cryohalolentis (strain ATCC BAA-1226 / DSM 17306 / VKM B-2378 / K5) protein is UPF0060 membrane protein Pcryo_1341.